The chain runs to 196 residues: Pentatricopeptide repeat-containing protein At1g62350 (196 aa).

PPR repeat units lie at residues 70 to 104 and 105 to 139; these read DMFF…EVLF and DQHT…PDRP.

Belongs to the PPR family. P subfamily.

This Arabidopsis thaliana (Mouse-ear cress) protein is Pentatricopeptide repeat-containing protein At1g62350.